Consider the following 154-residue polypeptide: Ribonuclease H (154 aa).

One can recognise an RNase H type-1 domain in the interval 1-142; the sequence is MLKQITLYTD…CDELARNAAL (142 aa). Mg(2+) is bound by residues Asp10, Glu48, Asp70, and Asp134.

The protein belongs to the RNase H family. As to quaternary structure, monomer. Mg(2+) is required as a cofactor.

It is found in the cytoplasm. The catalysed reaction is Endonucleolytic cleavage to 5'-phosphomonoester.. Its function is as follows. Endonuclease that specifically degrades the RNA of RNA-DNA hybrids. This Tolumonas auensis (strain DSM 9187 / NBRC 110442 / TA 4) protein is Ribonuclease H.